Reading from the N-terminus, the 530-residue chain is NMDA receptor synaptonuclear signaling and neuronal migration factor (530 aa).

Gly2 carries the N-myristoyl glycine lipid modification. The tract at residues 2–233 is necessary and sufficient to elicit dendritic processes and synaptic contacts; sequence GAAASRRRAL…FSFQTATTTM (232 aa). Disordered regions lie at residues 34–67 and 125–197; these read SQSH…APQN and KGRR…GRRK. The segment covering 38-48 has biased composition (basic and acidic residues); sequence PENRNGADHLL. Over residues 125-137 the composition is skewed to basic residues; that stretch reads KGRRQRHPHHHSQ. A compositionally biased stretch (polar residues) spans 153–162; it reads PCQSWAGSRQ. Residue Ser204 is modified to Phosphoserine. Positions 247–250 match the Nuclear localization signal motif; sequence RRKR. Residues 285 to 312 are disordered; that stretch reads RSFSRSWSDPTPMKADTSHDSRDSSDLQ. Phosphoserine is present on residues Ser290 and Ser292. A compositionally biased stretch (basic and acidic residues) spans 300–309; sequence DTSHDSRDSS.

Belongs to the NSMF family. As to quaternary structure, interacts with KPNA1; the interaction occurs in a calcium-independent manner after synaptic NMDA receptor stimulation and is required for nuclear import of NSMF but is competed by CABP1. Interacts (via the central NLS-containing motif region) with CABP1 (via EF-hands 1 and 2); the interaction occurs in a calcium-dependent manner after synaptic NMDA receptor stimulation and prevents the nuclear import of NSMF. Cannot be competed by calmodulin. Post-translationally, proteolytically processed after NMDA receptor activation. Cleaved in a calcium-dependent and calpain-sensitive manner. Calpain cleavage is essential for the translocation process from dendrites to the nucleus. In terms of tissue distribution, highly expressed in adult and fetal brain. Weakly expressed in heart, liver, spleen, testis, small intestine, skeletal muscle, peripheral white blood cells and kidney.

Its subcellular location is the nucleus. The protein resides in the nucleus envelope. The protein localises to the nucleus membrane. It is found in the nucleus matrix. It localises to the cytoplasm. Its subcellular location is the cell cortex. The protein resides in the cytoskeleton. The protein localises to the cell membrane. It is found in the cell projection. It localises to the dendrite. Its subcellular location is the synapse. The protein resides in the synaptosome. The protein localises to the postsynaptic density. It is found in the membrane. In terms of biological role, couples NMDA-sensitive glutamate receptor signaling to the nucleus and triggers long-lasting changes in the cytoarchitecture of dendrites and spine synapse processes. Part of the cAMP response element-binding protein (CREB) shut-off signaling pathway. Stimulates outgrowth of olfactory axons and migration of gonadotropin-releasing hormone (GnRH) and luteinizing-hormone-releasing hormone (LHRH) neuronal cells. This is NMDA receptor synaptonuclear signaling and neuronal migration factor (NSMF) from Homo sapiens (Human).